A 326-amino-acid chain; its full sequence is NADH-ubiquinone oxidoreductase chain 1 (326 aa).

9 helical membrane passes run 1–21 (MFLL…LVAV), 41–61 (PNIV…KLFV), 72–92 (IIIF…SWCV), 104–124 (INIG…GIIT), 152–172 (IGLI…TEIV), 177–197 (SIWF…SILA), 234–256 (YANM…LPPF), 268–288 (VWFG…RSSF), and 303–323 (ILLP…LSFN).

Belongs to the complex I subunit 1 family.

It localises to the mitochondrion inner membrane. The enzyme catalyses a ubiquinone + NADH + 5 H(+)(in) = a ubiquinol + NAD(+) + 4 H(+)(out). In terms of biological role, core subunit of the mitochondrial membrane respiratory chain NADH dehydrogenase (Complex I) that is believed to belong to the minimal assembly required for catalysis. Complex I functions in the transfer of electrons from NADH to the respiratory chain. The immediate electron acceptor for the enzyme is believed to be ubiquinone. This Chondrus crispus (Carrageen Irish moss) protein is NADH-ubiquinone oxidoreductase chain 1 (ND1).